A 31-amino-acid chain; its full sequence is Cyclotide mden-M (31 aa).

The cyclopeptide (Gly-Asn) cross-link spans Gly1–Asn31. Cystine bridges form between Cys5/Cys21, Cys9/Cys23, and Cys14/Cys28.

Belongs to the cyclotide family. Bracelet subfamily. In terms of processing, this is a cyclic peptide.

Probably participates in a plant defense mechanism. This chain is Cyclotide mden-M, found in Melicytus dentatus (Tree violet).